Here is a 196-residue protein sequence, read N- to C-terminus: Orotate phosphoribosyltransferase (196 aa).

5-phospho-alpha-D-ribose 1-diphosphate contacts are provided by residues Arg-102, Lys-103, Lys-106, His-108, and 129–137 (EDVVTTGGS). Thr-133 and Arg-161 together coordinate orotate.

The protein belongs to the purine/pyrimidine phosphoribosyltransferase family. PyrE subfamily. As to quaternary structure, homodimer. Mg(2+) is required as a cofactor.

It carries out the reaction orotidine 5'-phosphate + diphosphate = orotate + 5-phospho-alpha-D-ribose 1-diphosphate. The protein operates within pyrimidine metabolism; UMP biosynthesis via de novo pathway; UMP from orotate: step 1/2. Catalyzes the transfer of a ribosyl phosphate group from 5-phosphoribose 1-diphosphate to orotate, leading to the formation of orotidine monophosphate (OMP). The chain is Orotate phosphoribosyltransferase from Prochlorococcus marinus (strain MIT 9303).